The primary structure comprises 326 residues: Protoheme IX farnesyltransferase (326 aa).

The next 8 helical transmembrane spans lie at leucine 35–leucine 55, leucine 60–leucine 80, serine 106–valine 126, leucine 129–leucine 149, isoleucine 157–glycine 177, tryptophan 185–leucine 205, glycine 242–phenylalanine 262, and alanine 283–leucine 303.

The protein belongs to the UbiA prenyltransferase family. Protoheme IX farnesyltransferase subfamily.

Its subcellular location is the cell inner membrane. The catalysed reaction is heme b + (2E,6E)-farnesyl diphosphate + H2O = Fe(II)-heme o + diphosphate. It participates in porphyrin-containing compound metabolism; heme O biosynthesis; heme O from protoheme: step 1/1. Functionally, converts heme B (protoheme IX) to heme O by substitution of the vinyl group on carbon 2 of heme B porphyrin ring with a hydroxyethyl farnesyl side group. This is Protoheme IX farnesyltransferase from Parasynechococcus marenigrum (strain WH8102).